The following is a 450-amino-acid chain: Chromosomal replication initiator protein DnaA 2 (450 aa).

Positions 1-87 (MLTCNECTTW…LEFVVAEHKK (87 aa)) are domain I, interacts with DnaA modulators. A domain II region spans residues 87–114 (KPSAPVASQKESNEGISEVFEETKDFEL). The tract at residues 115–330 (KLNLSYRFDN…GAINKLTAYC (216 aa)) is domain III, AAA+ region. ATP is bound by residues Gly-159, Gly-161, Lys-162, and Thr-163. Residues 331–450 (RLFGKSLTET…VNLCKNHIVG (120 aa)) are domain IV, binds dsDNA.

This sequence belongs to the DnaA family. In terms of assembly, oligomerizes as a right-handed, spiral filament on DNA at oriC.

It localises to the cytoplasm. Functionally, plays an essential role in the initiation and regulation of chromosomal replication. ATP-DnaA binds to the origin of replication (oriC) to initiate formation of the DNA replication initiation complex once per cell cycle. Binds the DnaA box (a 9 base pair repeat at the origin) and separates the double-stranded (ds)DNA. Forms a right-handed helical filament on oriC DNA; dsDNA binds to the exterior of the filament while single-stranded (ss)DNA is stabiized in the filament's interior. The ATP-DnaA-oriC complex binds and stabilizes one strand of the AT-rich DNA unwinding element (DUE), permitting loading of DNA polymerase. After initiation quickly degrades to an ADP-DnaA complex that is not apt for DNA replication. Binds acidic phospholipids. The sequence is that of Chromosomal replication initiator protein DnaA 2 from Chlamydia pneumoniae (Chlamydophila pneumoniae).